The primary structure comprises 507 residues: Fatty acid resistance protein FarB (507 aa).

Helical transmembrane passes span 8–28, 52–72, 78–98, 109–129, 136–156, 164–184, 199–219, 233–253, 274–294, 303–323, 334–354, 363–383, 399–419, and 478–498; these read GAAL…EVLD, WVIT…GFLA, VKLF…CGIA, ILQG…LMAS, MLAL…GPIL, WHWG…AWIT, PTDY…QMML, IITL…WELG, IATS…PLVL, AWAG…SPLI, LLVT…TDFY, IWPQ…LTTI, LSNF…STLW, and IFLA…LAKP.

The protein belongs to the major facilitator superfamily. EmrB family. Probably part of a tripartite efflux system FarAB-MtrE, which is composed of an inner membrane transporter, FarB, a periplasmic membrane fusion protein, FarA, and an outer membrane component, MtrE.

The protein localises to the cell inner membrane. Mediates resistance to long-chained antibacterial fatty acids (FAs). Function is dependent on the MtrE outer membrane protein. This Neisseria gonorrhoeae protein is Fatty acid resistance protein FarB.